Consider the following 94-residue polypeptide: Large ribosomal subunit protein eL14 (94 aa).

It belongs to the eukaryotic ribosomal protein eL14 family.

This Methanopyrus kandleri (strain AV19 / DSM 6324 / JCM 9639 / NBRC 100938) protein is Large ribosomal subunit protein eL14.